The chain runs to 324 residues: Probable tRNA pseudouridine synthase B (324 aa).

D72 (nucleophile) is an active-site residue. The 76-residue stretch at 239-314 (LPRVVILDSA…LVIETRKVFM (76 aa)) folds into the PUA domain.

The protein belongs to the pseudouridine synthase TruB family. Type 2 subfamily.

The catalysed reaction is uridine(55) in tRNA = pseudouridine(55) in tRNA. Could be responsible for synthesis of pseudouridine from uracil-55 in the psi GC loop of transfer RNAs. In Methanothermobacter thermautotrophicus (strain ATCC 29096 / DSM 1053 / JCM 10044 / NBRC 100330 / Delta H) (Methanobacterium thermoautotrophicum), this protein is Probable tRNA pseudouridine synthase B.